The primary structure comprises 695 residues: Follicle-stimulating hormone receptor (695 aa).

Residues 1 to 17 form the signal peptide; the sequence is MALLLVALLAFLSLGSG. Cystine bridges form between Cys18–Cys25 and Cys23–Cys32. One can recognise an LRRNT domain in the interval 18–46; that stretch reads CHHRLCHCSNGVFLCQESKVTEIPSDLPR. At 18–366 the chain is on the extracellular side; sequence CHHRLCHCSN…EDIMGDDILR (349 aa). LRR repeat units follow at residues 49-72, 73-97, 98-118, 119-143, 144-169, 170-192, 193-216, 217-240, and 241-259; these read VELR…FGDL, EKIE…LPKL, HEIR…AFQN, LPNL…KIQS, LQKV…MGLS, FESM…AFNG, TQLD…VFQG, ASGP…GLEN, and LKKL…PSLE. Asn191 and Asn199 each carry an N-linked (GlcNAc...) asparagine glycan. 4 disulfide bridges follow: Cys275/Cys346, Cys276/Cys292, Cys276/Cys356, and Cys292/Cys338. The N-linked (GlcNAc...) asparagine glycan is linked to Asn293. Tyr335 bears the Sulfotyrosine mark. A helical transmembrane segment spans residues 367-387; that stretch reads VLIWFISILAITGNILVLVIL. The Cytoplasmic portion of the chain corresponds to 388-398; that stretch reads ITSQYKLTVPR. A helical membrane pass occupies residues 399–421; the sequence is FLMCNLAFADLCIGIYLLLIASV. At 422 to 443 the chain is on the extracellular side; sequence DVHTKTEYHNYAIDWQTGAGCD. A disulfide bridge links Cys442 with Cys517. The chain crosses the membrane as a helical span at residues 444–465; the sequence is AAGFFTVFASELSVYTLTAITL. The Cytoplasmic portion of the chain corresponds to 466-485; it reads ERWHTITHAMQLECKVQLRH. Residues 486-508 traverse the membrane as a helical segment; sequence AASIMLVGWIFAFAVALFPIFGI. The Extracellular portion of the chain corresponds to 509–528; that stretch reads SSYMKVSICLPMDIDSPLSQ. A helical membrane pass occupies residues 529 to 550; that stretch reads LYVMSLLVLNVLAFVVICGCYT. Residues 551-573 are Cytoplasmic-facing; the sequence is HIYLTVRNPNITSSSSDTKIAKR. The chain crosses the membrane as a helical span at residues 574–597; the sequence is MAMLIFTDFLCMAPISFFAISASL. Residues 598–608 are Extracellular-facing; that stretch reads KVPLITVSKSK. A helical membrane pass occupies residues 609–630; it reads ILLVLFYPINSCANPFLYAIFT. Over 631–695 the chain is Cytoplasmic; the sequence is KNFRRDFFIL…LIPLRHLAKN (65 aa).

This sequence belongs to the G-protein coupled receptor 1 family. FSH/LSH/TSH subfamily. As to quaternary structure, homotrimer. Functions as a homotrimer binding the FSH hormone heterodimer composed of CGA and FSHB. Interacts with ARRB2. Interacts with APPL2; interaction is independent of follicle stimulating hormone stimulation. Post-translationally, N-glycosylated; indirectly required for FSH-binding, possibly via a conformational change that allows high affinity binding of hormone. In terms of processing, sulfated.

It is found in the cell membrane. In terms of biological role, g protein-coupled receptor for follitropin, the follicle-stimulating hormone. Through cAMP production activates the downstream PI3K-AKT and ERK1/ERK2 signaling pathways. This is Follicle-stimulating hormone receptor (FSHR) from Bos taurus (Bovine).